A 288-amino-acid chain; its full sequence is Quinate/shikimate dehydrogenase (288 aa).

Residues lysine 71 and aspartate 107 each contribute to the substrate site. NAD(+) contacts are provided by residues 132 to 135 (AGGA), 155 to 158 (NRRD), lysine 205, 232 to 235 (CVYN), and glycine 255.

It belongs to the shikimate dehydrogenase family. As to quaternary structure, homodimer.

It carries out the reaction L-quinate + NAD(+) = 3-dehydroquinate + NADH + H(+). It catalyses the reaction L-quinate + NADP(+) = 3-dehydroquinate + NADPH + H(+). The catalysed reaction is shikimate + NADP(+) = 3-dehydroshikimate + NADPH + H(+). The enzyme catalyses shikimate + NAD(+) = 3-dehydroshikimate + NADH + H(+). Its pathway is metabolic intermediate biosynthesis; chorismate biosynthesis; chorismate from D-erythrose 4-phosphate and phosphoenolpyruvate: step 4/7. The actual biological function of YdiB remains unclear, nor is it known whether 3-dehydroshikimate or quinate represents the natural substrate. Catalyzes the reversible NAD-dependent reduction of both 3-dehydroshikimate (DHSA) and 3-dehydroquinate to yield shikimate (SA) and quinate, respectively. It can use both NAD or NADP for catalysis, however it has higher catalytic efficiency with NAD. In Escherichia coli O17:K52:H18 (strain UMN026 / ExPEC), this protein is Quinate/shikimate dehydrogenase.